Reading from the N-terminus, the 49-residue chain is uncharacterized protein (49 aa).

This is an uncharacterized protein from Sulfolobus spindle-shape virus 1 (SSV1).